The primary structure comprises 255 residues: Tabinhibitin 1 (255 aa).

An N-terminal signal peptide occupies residues 1-23; sequence MTSILVSRFLIAALVLQYATSDA. In terms of domain architecture, SCP spans 67–211; that stretch reads LSKINDVRDH…KARALLTCNF (145 aa).

The protein belongs to the CRISP family. In terms of tissue distribution, expressed in salivary glands.

It is found in the secreted. In terms of biological role, inhibits platelet aggregation induced by all agonists tested. May act by competing with fibrinogen for binding to glycoprotein IIb/IIIa (ITGA2B/ITGB3). The polypeptide is Tabinhibitin 1 (Tabanus yao (Horsefly)).